A 531-amino-acid polypeptide reads, in one-letter code: Probable mitochondrial-processing peptidase subunit beta, mitochondrial (531 aa).

Residues 1 to 78 (MAMKNLLSLA…ENPDKRFLKY (78 aa)) constitute a mitochondrion transit peptide. The disordered stretch occupies residues 30–50 (SAIDSVPASASPTALSPPPPH). His-141 serves as a coordination point for Zn(2+). Glu-144 acts as the Proton acceptor in catalysis. Zn(2+) is bound at residue His-145. Residue Glu-214 is part of the active site. Glu-221 contacts Zn(2+).

The protein belongs to the peptidase M16 family. Heterodimer of an alpha subunit and a beta subunit subunits, forming the mitochondrial processing protease (MPP) in which the alpha subunit is involved in substrate recognition and binding and the beta subunit is the catalytic subunit. Component of the ubiquinol-cytochrome c oxidoreductase (cytochrome b-c1 complex, complex III, CIII), a multisubunit enzyme composed of 10 subunits. The complex is composed of 3 respiratory subunits cytochrome b (MT-CYB), cytochrome c1 (CYC1-1 or CYC1-2) and Rieske protein (UCR1-1 or UCR1-2), 2 core protein subunits MPPalpha1 (or MPPalpha2) and MPPB, and 5 low-molecular weight protein subunits QCR7-1 (or QCR7-2), UCRQ-1 (or UCRQ-2), QCR9, UCRY and probably QCR6-1 (or QCR6-2). The complex exists as an obligatory dimer and forms supercomplexes (SCs) in the inner mitochondrial membrane with NADH-ubiquinone oxidoreductase (complex I, CI), resulting in different assemblies (supercomplexes SCI(1)III(2) and SCI(2)III(4)). It depends on Zn(2+) as a cofactor.

It localises to the mitochondrion. It is found in the mitochondrion inner membrane. The enzyme catalyses Release of N-terminal transit peptides from precursor proteins imported into the mitochondrion, typically with Arg in position P2.. Binding to the alpha subunit is required for catalytic activity. Catalytic subunit of the essential mitochondrial processing protease (MPP), which cleaves the mitochondrial sequence off newly imported precursors proteins. Preferentially, cleaves after an arginine at position P2. Functionally, component of the ubiquinol-cytochrome c oxidoreductase, a multisubunit transmembrane complex that is part of the mitochondrial electron transport chain which drives oxidative phosphorylation. The respiratory chain contains 3 multisubunit complexes succinate dehydrogenase (complex II, CII), ubiquinol-cytochrome c oxidoreductase (cytochrome b-c1 complex, complex III, CIII) and cytochrome c oxidase (complex IV, CIV), that cooperate to transfer electrons derived from NADH and succinate to molecular oxygen, creating an electrochemical gradient over the inner membrane that drives transmembrane transport and the ATP synthase. The cytochrome b-c1 complex catalyzes electron transfer from ubiquinol to cytochrome c, linking this redox reaction to translocation of protons across the mitochondrial inner membrane, with protons being carried across the membrane as hydrogens on the quinol. In the process called Q cycle, 2 protons are consumed from the matrix, 4 protons are released into the intermembrane space and 2 electrons are passed to cytochrome c. The sequence is that of Probable mitochondrial-processing peptidase subunit beta, mitochondrial (MPPbeta) from Arabidopsis thaliana (Mouse-ear cress).